The sequence spans 257 residues: Ribonuclease HII (257 aa).

The region spanning 72–257 is the RNase H type-2 domain; it reads TYIAGIDEVG…FAPIKDMIQK (186 aa). Positions 78, 79, and 170 each coordinate a divalent metal cation.

This sequence belongs to the RNase HII family. Requires Mn(2+) as cofactor. Mg(2+) serves as cofactor.

It localises to the cytoplasm. It carries out the reaction Endonucleolytic cleavage to 5'-phosphomonoester.. Its function is as follows. Endonuclease that specifically degrades the RNA of RNA-DNA hybrids. The sequence is that of Ribonuclease HII from Bacillus cereus (strain ATCC 10987 / NRS 248).